A 399-amino-acid chain; its full sequence is Bifunctional enzyme IspD/IspF (399 aa).

The segment at 1–239 (MHTWALLLAA…SSEKKNMQVP (239 aa)) is 2-C-methyl-D-erythritol 4-phosphate cytidylyltransferase. Residues 240–399 (CVGWGYDVHR…AVTALRRVSS (160 aa)) are 2-C-methyl-D-erythritol 2,4-cyclodiphosphate synthase. Residues D246 and H248 each contribute to the a divalent metal cation site. 4-CDP-2-C-methyl-D-erythritol 2-phosphate-binding positions include 246–248 (DVH) and 273–274 (HS). A divalent metal cation is bound at residue H281. 4-CDP-2-C-methyl-D-erythritol 2-phosphate is bound by residues 295–297 (DIG), 300–304 (FPDTD), 371–374 (TTEE), and F378.

This sequence in the N-terminal section; belongs to the IspD/TarI cytidylyltransferase family. IspD subfamily. It in the C-terminal section; belongs to the IspF family. The cofactor is a divalent metal cation.

It catalyses the reaction 2-C-methyl-D-erythritol 4-phosphate + CTP + H(+) = 4-CDP-2-C-methyl-D-erythritol + diphosphate. The catalysed reaction is 4-CDP-2-C-methyl-D-erythritol 2-phosphate = 2-C-methyl-D-erythritol 2,4-cyclic diphosphate + CMP. It functions in the pathway isoprenoid biosynthesis; isopentenyl diphosphate biosynthesis via DXP pathway; isopentenyl diphosphate from 1-deoxy-D-xylulose 5-phosphate: step 2/6. Its pathway is isoprenoid biosynthesis; isopentenyl diphosphate biosynthesis via DXP pathway; isopentenyl diphosphate from 1-deoxy-D-xylulose 5-phosphate: step 4/6. In terms of biological role, bifunctional enzyme that catalyzes the formation of 4-diphosphocytidyl-2-C-methyl-D-erythritol from CTP and 2-C-methyl-D-erythritol 4-phosphate (MEP) (IspD), and catalyzes the conversion of 4-diphosphocytidyl-2-C-methyl-D-erythritol 2-phosphate (CDP-ME2P) to 2-C-methyl-D-erythritol 2,4-cyclodiphosphate (ME-CPP) with a corresponding release of cytidine 5-monophosphate (CMP) (IspF). The polypeptide is Bifunctional enzyme IspD/IspF (Oleidesulfovibrio alaskensis (strain ATCC BAA-1058 / DSM 17464 / G20) (Desulfovibrio alaskensis)).